Here is a 279-residue protein sequence, read N- to C-terminus: Ribonuclease Z (279 aa).

Residues histidine 61, histidine 63, aspartate 65, histidine 66, histidine 153, aspartate 176, and histidine 240 each contribute to the Zn(2+) site. Aspartate 65 acts as the Proton acceptor in catalysis.

Belongs to the RNase Z family. Homodimer. Zn(2+) serves as cofactor.

It carries out the reaction Endonucleolytic cleavage of RNA, removing extra 3' nucleotides from tRNA precursor, generating 3' termini of tRNAs. A 3'-hydroxy group is left at the tRNA terminus and a 5'-phosphoryl group is left at the trailer molecule.. Zinc phosphodiesterase, which displays some tRNA 3'-processing endonuclease activity. Probably involved in tRNA maturation, by removing a 3'-trailer from precursor tRNA. The protein is Ribonuclease Z of Mycobacterium marinum (strain ATCC BAA-535 / M).